Reading from the N-terminus, the 117-residue chain is Small ribosomal subunit protein uS17 (117 aa).

Residues 97-117 (AEGLAAAHAGEPETESAATDA) are disordered.

This sequence belongs to the universal ribosomal protein uS17 family. In terms of assembly, part of the 30S ribosomal subunit.

In terms of biological role, one of the primary rRNA binding proteins, it binds specifically to the 5'-end of 16S ribosomal RNA. The protein is Small ribosomal subunit protein uS17 of Rhodopirellula baltica (strain DSM 10527 / NCIMB 13988 / SH1).